The sequence spans 374 residues: Ribosomal RNA large subunit methyltransferase G (374 aa).

The protein belongs to the methyltransferase superfamily. RlmG family.

The protein localises to the cytoplasm. It catalyses the reaction guanosine(1835) in 23S rRNA + S-adenosyl-L-methionine = N(2)-methylguanosine(1835) in 23S rRNA + S-adenosyl-L-homocysteine + H(+). In terms of biological role, specifically methylates the guanine in position 1835 (m2G1835) of 23S rRNA. This is Ribosomal RNA large subunit methyltransferase G from Pseudomonas aeruginosa (strain ATCC 15692 / DSM 22644 / CIP 104116 / JCM 14847 / LMG 12228 / 1C / PRS 101 / PAO1).